The following is a 575-amino-acid chain: Transcription factor E3 (575 aa).

Ser47 is subject to Phosphoserine; by MTOR. Positions 90–126 (ATLSASSSAGGSRTPAMSSSSSSRVLLRQQLMRAQAQ) are enriched in low complexity. The tract at residues 90–153 (ATLSASSSAG…SPAPASPAIS (64 aa)) is disordered. Positions 127–136 (EQERRERREQ) are enriched in basic and acidic residues. Arg188 carries the asymmetric dimethylarginine modification. The disordered stretch occupies residues 211 to 246 (LASQALTPPPGPASAQPLPAPEAAHTTGPTGSAPNS). Positions 260–271 (EIDDVIDEIISL) are strong transcription activation domain. The residue at position 321 (Ser321) is a Phosphoserine; by MTOR. Residue Lys339 forms a Glycyl lysine isopeptide (Lys-Gly) (interchain with G-Cter in SUMO2) linkage. The region spanning 346-399 (QKKDNHNLIERRRRFNINDRIKELGTLIPKSSDPEMRWNKGTILKASVDYIRKL) is the bHLH domain. A Nuclear localization signal motif is present at residues 356–359 (RRRR). A leucine-zipper region spans residues 409 to 430 (LESRQRSLEQANRSLQLRIQEL). Disordered regions lie at residues 473–498 (GAAT…PPSD) and 534–575 (GGLS…EEES). Residues 539–575 (GALSPLRAASDPLLSSVSPAVSKASSRRSSFSMEEES) are compositionally biased toward low complexity. 6 positions are modified to phosphoserine: Ser542, Ser548, Ser554, Ser556, Ser560, and Ser568.

This sequence belongs to the MiT/TFE family. In terms of assembly, homodimer and heterodimer; with TFEB or MITF. Interacts with RRAGC/RagC GDP-bound and RRAGD/RagD GDP-bound; promoting its recruitment to lysosomal membrane in the presence of nutrients. Interacts with TSC22D1; the interaction is enhanced in the presence of TGF-beta. Post-translationally, sumoylated; does not affect dimerization with MITF. In terms of processing, phosphorylation ar Ser-47 and Ser-321 by MTOR via non-canonical mTORC1 pathway regulates its stability and subcellular location, respectively. When nutrients are present, phosphorylation by MTOR at Ser-47 promotes ubiquitination by the SCF(BTRC) complex, followed by degradation. When nutrients are present, phosphorylation by MTOR at Ser-321 also promotes association with 14-3-3/YWHA adapters and retention in the cytosol. Phosphorylation at Ser-47 plays a more critical role than phosphorylation at Ser-321 for TFE3 inactivation. Inhibition of mTORC1, starvation and lysosomal disruption, promotes dephosphorylation and transcription factor activity. Ubiquitinated by the SCF(BTRC) and SCF(FBXW11) complexes following phosphorylation at Ser-47 by MTOR, leading to its degradation by the proteasome. As to expression, ubiquitous in fetal and adult tissues.

The protein localises to the cytoplasm. The protein resides in the cytosol. It is found in the nucleus. Its subcellular location is the lysosome membrane. Its function is as follows. Transcription factor that acts as a master regulator of lysosomal biogenesis and immune response. Specifically recognizes and binds E-box sequences (5'-CANNTG-3'); efficient DNA-binding requires dimerization with itself or with another MiT/TFE family member such as TFEB or MITF. Involved in the cellular response to amino acid availability by acting downstream of MTOR: in the presence of nutrients, TFE3 phosphorylation by MTOR promotes its inactivation. Upon starvation or lysosomal stress, inhibition of MTOR induces TFE3 dephosphorylation, resulting in transcription factor activity. Specifically recognizes and binds the CLEAR-box sequence (5'-GTCACGTGAC-3') present in the regulatory region of many lysosomal genes, leading to activate their expression, thereby playing a central role in expression of lysosomal genes. Maintains the pluripotent state of embryonic stem cells by promoting the expression of genes such as ESRRB; mTOR-dependent TFE3 cytosolic retention and inactivation promotes exit from pluripotency. Required to maintain the naive pluripotent state of hematopoietic stem cell; mTOR-dependent cytoplasmic retention of TFE3 promotes the exit of hematopoietic stem cell from pluripotency. TFE3 activity is also involved in the inhibition of neuronal progenitor differentiation. Acts as a positive regulator of browning of adipose tissue by promoting expression of target genes; mTOR-dependent phosphorylation promotes cytoplasmic retention of TFE3 and inhibits browning of adipose tissue. In association with TFEB, activates the expression of CD40L in T-cells, thereby playing a role in T-cell-dependent antibody responses in activated CD4(+) T-cells and thymus-dependent humoral immunity. Specifically recognizes the MUE3 box, a subset of E-boxes, present in the immunoglobulin enhancer. It also binds very well to a USF/MLTF site. Promotes TGF-beta-induced transcription of COL1A2; via its interaction with TSC22D1 at E-boxes in the gene proximal promoter. May regulate lysosomal positioning in response to nutrient deprivation by promoting the expression of PIP4P1. The polypeptide is Transcription factor E3 (Homo sapiens (Human)).